A 279-amino-acid polypeptide reads, in one-letter code: Phosphatidylglycerol--prolipoprotein diacylglyceryl transferase (279 aa).

A run of 7 helical transmembrane segments spans residues 22-42, 58-78, 89-109, 128-148, 195-215, 223-243, and 256-276; these read SAHWYGLMYLIGFYFIMWSSI, ILYFSFLNALIGGRIGYVIFY, FIFKVWEGGMSFHGGLLGSII, FLVPLIPFGLGFGRIGNFING, ISQLYEMFLEGILLFIILNIF, GYMSGLFLILYGSFRIIAEFF, and YISLGQILSIPMILYGLILII. R141 is a binding site for a 1,2-diacyl-sn-glycero-3-phospho-(1'-sn-glycerol).

This sequence belongs to the Lgt family.

It is found in the cell membrane. It carries out the reaction L-cysteinyl-[prolipoprotein] + a 1,2-diacyl-sn-glycero-3-phospho-(1'-sn-glycerol) = an S-1,2-diacyl-sn-glyceryl-L-cysteinyl-[prolipoprotein] + sn-glycerol 1-phosphate + H(+). Its pathway is protein modification; lipoprotein biosynthesis (diacylglyceryl transfer). Catalyzes the transfer of the diacylglyceryl group from phosphatidylglycerol to the sulfhydryl group of the N-terminal cysteine of a prolipoprotein, the first step in the formation of mature lipoproteins. The chain is Phosphatidylglycerol--prolipoprotein diacylglyceryl transferase from Wigglesworthia glossinidia brevipalpis.